Reading from the N-terminus, the 813-residue chain is Xaa-Pro dipeptidyl-peptidase (813 aa).

Active-site charge relay system residues include Ser375, Asp495, and His526.

The protein belongs to the peptidase S15 family. In terms of assembly, homodimer.

Its subcellular location is the cytoplasm. It carries out the reaction Hydrolyzes Xaa-Pro-|- bonds to release unblocked, N-terminal dipeptides from substrates including Ala-Pro-|-p-nitroanilide and (sequentially) Tyr-Pro-|-Phe-Pro-|-Gly-Pro-|-Ile.. Removes N-terminal dipeptides sequentially from polypeptides having unsubstituted N-termini provided that the penultimate residue is proline. This chain is Xaa-Pro dipeptidyl-peptidase, found in Lactiplantibacillus plantarum (strain ATCC BAA-793 / NCIMB 8826 / WCFS1) (Lactobacillus plantarum).